Here is a 190-residue protein sequence, read N- to C-terminus: NADH dehydrogenase [ubiquinone] iron-sulfur protein 3 (190 aa).

It belongs to the complex I 30 kDa subunit family. As to quaternary structure, complex I is composed of about 45 different subunits. This is a component of the iron-sulfur (IP) fragment of the enzyme.

The protein resides in the mitochondrion inner membrane. The enzyme catalyses a ubiquinone + NADH + 5 H(+)(in) = a ubiquinol + NAD(+) + 4 H(+)(out). In terms of biological role, core subunit of the mitochondrial membrane respiratory chain NADH dehydrogenase (Complex I) that is believed to belong to the minimal assembly required for catalysis. Complex I functions in the transfer of electrons from NADH to the respiratory chain. The immediate electron acceptor for the enzyme is believed to be ubiquinone. This chain is NADH dehydrogenase [ubiquinone] iron-sulfur protein 3 (NAD9), found in Solanum tuberosum (Potato).